The following is a 483-amino-acid chain: MGKTLAEKVWDAHVVRKGEGEGANAQPDLLFIDLHLIHEVTSPQAFEGLRLAGRPLRRVDLTIATEDHNTPTLDIDKPIADLTSRTQIETLRANCKEFGVRLHSLGDKEQGIVHVVGPQLGLTQPGMTVVCGDSHTSTHGAFGALAMGIGTSEVEHVMATQTLSLKPFKTMAINVEGTLRPGVTAKDIILAVIAKIGTGGGQGYVLEYRGSAIRALSMDARMTICNMSIEAGARAGMVAPDQTTYDYMQGRPHAPEGADWDAAVEYWNTLTTDADATFDVEVDLDADTLEPFVTWGTNPGQGVSLSAKVPSPEDFGDENAKAAAERALQYMGLEAGTPMKDIRVDTVFLGSCTNSRIEDLRVAADIIRGRAKDPNVRMLVVPGSARVRLEAEAEGLDKVFKEFGAEWRFAGCSMCLGMNPDQLEPGERCASTSNRNFEGRQGKGGRTHLVSPVVAAATAVRGTLSSPSDLEPAAAGALTGIAV.

3 residues coordinate [4Fe-4S] cluster: Cys-352, Cys-412, and Cys-415.

The protein belongs to the aconitase/IPM isomerase family. LeuC type 1 subfamily. In terms of assembly, heterodimer of LeuC and LeuD. The cofactor is [4Fe-4S] cluster.

The enzyme catalyses (2R,3S)-3-isopropylmalate = (2S)-2-isopropylmalate. It participates in amino-acid biosynthesis; L-leucine biosynthesis; L-leucine from 3-methyl-2-oxobutanoate: step 2/4. In terms of biological role, catalyzes the isomerization between 2-isopropylmalate and 3-isopropylmalate, via the formation of 2-isopropylmaleate. In Paenarthrobacter aurescens (strain TC1), this protein is 3-isopropylmalate dehydratase large subunit.